A 299-amino-acid polypeptide reads, in one-letter code: J domain-containing protein CG6693 (299 aa).

The 68-residue stretch at 15–82 (DVYKLMELAR…QKRALYDEQG (68 aa)) folds into the J domain. Ser239 bears the Phosphoserine mark. Residues 266–299 (FEKKKKKSKKPAAKQETKPKLNGVKAGRVEKGKN) are disordered. Basic residues predominate over residues 268-277 (KKKKKSKKPA).

The protein is J domain-containing protein CG6693 of Drosophila melanogaster (Fruit fly).